The following is a 362-amino-acid chain: Methylthioribose-1-phosphate isomerase (362 aa).

The Proton donor role is filled by aspartate 252.

Belongs to the eIF-2B alpha/beta/delta subunits family. MtnA subfamily.

Its subcellular location is the cytoplasm. The protein resides in the nucleus. It catalyses the reaction 5-(methylsulfanyl)-alpha-D-ribose 1-phosphate = 5-(methylsulfanyl)-D-ribulose 1-phosphate. Its pathway is amino-acid biosynthesis; L-methionine biosynthesis via salvage pathway; L-methionine from S-methyl-5-thio-alpha-D-ribose 1-phosphate: step 1/6. Functionally, catalyzes the interconversion of methylthioribose-1-phosphate (MTR-1-P) into methylthioribulose-1-phosphate (MTRu-1-P). The polypeptide is Methylthioribose-1-phosphate isomerase (Drosophila persimilis (Fruit fly)).